The sequence spans 65 residues: MPKMKTDRGAAKRFKKTGSGGFKCKHANKRHILTKKTTKRKRHLRAPGMVAKPDLARVSAMLPYA.

Basic and acidic residues predominate over residues 1–10 (MPKMKTDRGA). The tract at residues 1–24 (MPKMKTDRGAAKRFKKTGSGGFKC) is disordered.

This sequence belongs to the bacterial ribosomal protein bL35 family.

The chain is Large ribosomal subunit protein bL35 from Tolumonas auensis (strain DSM 9187 / NBRC 110442 / TA 4).